We begin with the raw amino-acid sequence, 292 residues long: 4-hydroxy-tetrahydrodipicolinate synthase (292 aa).

Residue Thr-45 participates in pyruvate binding. Tyr-133 acts as the Proton donor/acceptor in catalysis. Catalysis depends on Lys-161, which acts as the Schiff-base intermediate with substrate. Residue Ile-203 participates in pyruvate binding.

The protein belongs to the DapA family. As to quaternary structure, homotetramer; dimer of dimers.

The protein localises to the cytoplasm. The catalysed reaction is L-aspartate 4-semialdehyde + pyruvate = (2S,4S)-4-hydroxy-2,3,4,5-tetrahydrodipicolinate + H2O + H(+). It functions in the pathway amino-acid biosynthesis; L-lysine biosynthesis via DAP pathway; (S)-tetrahydrodipicolinate from L-aspartate: step 3/4. In terms of biological role, catalyzes the condensation of (S)-aspartate-beta-semialdehyde [(S)-ASA] and pyruvate to 4-hydroxy-tetrahydrodipicolinate (HTPA). This chain is 4-hydroxy-tetrahydrodipicolinate synthase, found in Vibrio vulnificus (strain YJ016).